The primary structure comprises 91 residues: MYGLINIGFGNVISGDRVIAIVNPESAPLKRLKDEAKDEGKLIDATYGRKTRAILITDSNHIILSAIQPETIAQRFKQSMIEIEENLNKVR.

Belongs to the RemA family.

This chain is Putative regulatory protein Tlet_1629, found in Pseudothermotoga lettingae (strain ATCC BAA-301 / DSM 14385 / NBRC 107922 / TMO) (Thermotoga lettingae).